Reading from the N-terminus, the 535-residue chain is MASELSSAPVLSTPDDHILEVPAADSIPTSTLSDDALRTTYEIVRTADEIRAGGWKRIGLQFPDFMLVDAPRVVEALSKEINTHDQEEAKPERRIYVLADSSYSACCVDEIAAEHVSADVVVHYGRTCLSPTSHLPAIYVYTTHDLDYEVTINEIKKEFSDKTVKLVIMADLTYQNHVDKVVSLLKEQGYNDAVSTEVTRDPAALIPNRKILSDETHDDEHWKAYSIIHISDPPSALLLALYTRFASLHVLSTPSPALENPTMRTAGLLRRRFAKVLALASAGVIGILVNTLSVANYLSSINTLRERIARADKKSYTIVVGKLNPAKLANFAEIEGWVVVGCWESGLIEDDAGYWRPVITPFELEVALMSEEERVWGGEWWGGIEKLGLNDKPEDASKESEGAVAEEEVEFEDVAGGVEGEESAPPEFDMRTGKLISSSRPMRLPVRKNPSTTAETEANSDGQPTSTQQNDSLIKRSVGELASINGVASPGAEFLRSGRTWQGLGTDFDNEASTLVEEGRSGVARGYEVGESGRH.

3 residues coordinate [4Fe-4S] cluster: Cys107, Cys128, and Cys342. Residues Asn390–Glu401 show a composition bias toward basic and acidic residues. 2 disordered regions span residues Asn390 to Asp471 and Ala512 to His535. Acidic residues predominate over residues Val404–Ala424. Over residues Asn449–Asp471 the composition is skewed to polar residues.

It belongs to the DPH1/DPH2 family. DPH2 subfamily. In terms of assembly, component of the 2-(3-amino-3-carboxypropyl)histidine synthase complex composed of DPH1, DPH2, DPH3 and a NADH-dependent reductase, predominantly CBR1. The cofactor is [4Fe-4S] cluster.

It is found in the cytoplasm. It functions in the pathway protein modification; peptidyl-diphthamide biosynthesis. Required for the first step of diphthamide biosynthesis, a post-translational modification of histidine which occurs in elongation factor 2. DPH1 and DPH2 transfer a 3-amino-3-carboxypropyl (ACP) group from S-adenosyl-L-methionine (SAM) to a histidine residue, the reaction is assisted by a reduction system comprising DPH3 and a NADH-dependent reductase, predominantly CBR1. Facilitates the reduction of the catalytic iron-sulfur cluster found in the DPH1 subunit. In Gibberella zeae (strain ATCC MYA-4620 / CBS 123657 / FGSC 9075 / NRRL 31084 / PH-1) (Wheat head blight fungus), this protein is 2-(3-amino-3-carboxypropyl)histidine synthase subunit 2 (DPH2).